The following is a 407-amino-acid chain: MRPWTLAVTKWPPSAPVGHWRVSTRLSSSPGQLWGRPSNLSVEEHRASAPAGRSPRMLHPATQQSPFMVDLHEQVHQGPVPLSYTVTTVTTQGFPLPTSQHIPGCSAQQLPACSVMFSGQHYPLCCLPPPQLIQACTMQQLPGPYHTYPHLISSDHYILHPPPPAPPPQPTHMAPLGQFVSLQTQHPRMPLQRLDNEMDLRGDQHPLGSFTYSTSATGPALSPSVPLHYLPHDPLHQELSFGVPYSHMMPRRLSTQRYRLQQPLPPPPPPPPPSYYPSFLPYFLSMLPMSPTTVGPTISLDLDVDDVEMENYEALLNLAERLGDAKPRGLTKADIEQLPSYRFNPDSHQSEQTLCVVCFSDFEVRQLLRVLPCNHEFHAKCVDKWLKANRTCPICRADASEVPREAE.

A disordered region spans residues 26 to 58 (LSSSPGQLWGRPSNLSVEEHRASAPAGRSPRML). An RING-type; atypical zinc finger spans residues 355–396 (CVVCFSDFEVRQLLRVLPCNHEFHAKCVDKWLKANRTCPICR).

This is RING finger protein 44 (Rnf44) from Mus musculus (Mouse).